Consider the following 179-residue polypeptide: Large ribosomal subunit protein uL5 (179 aa).

The protein belongs to the universal ribosomal protein uL5 family. In terms of assembly, part of the 50S ribosomal subunit; part of the 5S rRNA/L5/L18/L25 subcomplex. Contacts the 5S rRNA and the P site tRNA. Forms a bridge to the 30S subunit in the 70S ribosome.

Functionally, this is one of the proteins that bind and probably mediate the attachment of the 5S RNA into the large ribosomal subunit, where it forms part of the central protuberance. In the 70S ribosome it contacts protein S13 of the 30S subunit (bridge B1b), connecting the 2 subunits; this bridge is implicated in subunit movement. Contacts the P site tRNA; the 5S rRNA and some of its associated proteins might help stabilize positioning of ribosome-bound tRNAs. The sequence is that of Large ribosomal subunit protein uL5 from Desulfitobacterium hafniense (strain Y51).